A 399-amino-acid polypeptide reads, in one-letter code: uncharacterized protein (399 aa).

A compositionally biased stretch (polar residues) spans 197–206; the sequence is ENSSASSVTS. Residues 197 to 224 are disordered; sequence ENSSASSVTSEECEQDVMDEQSAEDNEE. The span at 207–224 shows a compositional bias: acidic residues; it reads EECEQDVMDEQSAEDNEE.

This is an uncharacterized protein from Diadromus pulchellus (Parasitic wasp).